Consider the following 272-residue polypeptide: SWIRM domain-containing protein laf2 (272 aa).

The segment at His86–Gly148 is disordered. Low complexity-rich tracts occupy residues Ser95–Gly120 and Arg127–Ile136. Ser130 and Ser132 each carry phosphoserine. Phosphothreonine is present on Thr135. Residues Leu182–Asp272 form the SWIRM domain.

In terms of assembly, component of the RPD3C(L) complex.

The protein localises to the nucleus. In terms of biological role, component of the RPD3C(L) histone deacetylase complex (HDAC) responsible for the deacetylation of lysine residues on the N-terminal part of the core histones (H2A, H2B, H3 and H4). Histone deacetylation gives a tag for epigenetic repression and plays an important role in transcriptional regulation, cell cycle progression and developmental events. The chain is SWIRM domain-containing protein laf2 (laf2) from Schizosaccharomyces pombe (strain 972 / ATCC 24843) (Fission yeast).